The following is a 512-amino-acid chain: Glutathione-binding protein GsiB (512 aa).

The N-terminal stretch at 1–26 (MTQFITHKWLAALGLASSIAAFPALA) is a signal peptide.

Belongs to the bacterial solute-binding protein 5 family. The complex is composed of two ATP-binding proteins (GsiA), two transmembrane proteins (GsiC and GsiD) and a solute-binding protein (GsiB).

It is found in the periplasm. In terms of biological role, part of the ABC transporter complex GsiABCD involved in glutathione import. Binds glutathione. The protein is Glutathione-binding protein GsiB of Salmonella typhimurium (strain LT2 / SGSC1412 / ATCC 700720).